A 146-amino-acid chain; its full sequence is Hut operon positive regulatory protein (146 aa).

Belongs to the HutP family. As to quaternary structure, homohexamer.

Antiterminator that binds to cis-acting regulatory sequences on the mRNA in the presence of histidine, thereby suppressing transcription termination and activating the hut operon for histidine utilization. The polypeptide is Hut operon positive regulatory protein (Bacillus mycoides (strain KBAB4) (Bacillus weihenstephanensis)).